The sequence spans 698 residues: Elongation factor G (698 aa).

The tr-type G domain maps to 10–285; that stretch reads DKTRNIGIMA…GVVDYLPSPL (276 aa). GTP contacts are provided by residues 19–26, 83–87, and 137–140; these read AHIDAGKT, DTPGH, and NKMD.

This sequence belongs to the TRAFAC class translation factor GTPase superfamily. Classic translation factor GTPase family. EF-G/EF-2 subfamily.

The protein resides in the cytoplasm. Catalyzes the GTP-dependent ribosomal translocation step during translation elongation. During this step, the ribosome changes from the pre-translocational (PRE) to the post-translocational (POST) state as the newly formed A-site-bound peptidyl-tRNA and P-site-bound deacylated tRNA move to the P and E sites, respectively. Catalyzes the coordinated movement of the two tRNA molecules, the mRNA and conformational changes in the ribosome. The sequence is that of Elongation factor G from Lactobacillus johnsonii (strain CNCM I-12250 / La1 / NCC 533).